The sequence spans 469 residues: ATP synthase subunit beta (469 aa).

ATP is bound at residue 156 to 163 (GGAGVGKT).

Belongs to the ATPase alpha/beta chains family. In terms of assembly, F-type ATPases have 2 components, CF(1) - the catalytic core - and CF(0) - the membrane proton channel. CF(1) has five subunits: alpha(3), beta(3), gamma(1), delta(1), epsilon(1). CF(0) has three main subunits: a(1), b(2) and c(9-12). The alpha and beta chains form an alternating ring which encloses part of the gamma chain. CF(1) is attached to CF(0) by a central stalk formed by the gamma and epsilon chains, while a peripheral stalk is formed by the delta and b chains.

The protein resides in the cell membrane. The enzyme catalyses ATP + H2O + 4 H(+)(in) = ADP + phosphate + 5 H(+)(out). Functionally, produces ATP from ADP in the presence of a proton gradient across the membrane. The catalytic sites are hosted primarily by the beta subunits. In Bacillus anthracis (strain CDC 684 / NRRL 3495), this protein is ATP synthase subunit beta.